The primary structure comprises 237 residues: Sugar fermentation stimulation protein homolog (237 aa).

It belongs to the SfsA family.

The chain is Sugar fermentation stimulation protein homolog from Actinobacillus pleuropneumoniae serotype 3 (strain JL03).